The sequence spans 141 residues: UPF0310 protein SSA_0254 (141 aa).

The protein belongs to the UPF0310 family.

This is UPF0310 protein SSA_0254 from Streptococcus sanguinis (strain SK36).